A 314-amino-acid chain; its full sequence is Probable cell division protein WhiA (314 aa).

A DNA-binding region (H-T-H motif) is located at residues 274–305; it reads SLAELGDRLEISKSGANHRMRKLKALEDMINA.

Belongs to the WhiA family.

Functionally, involved in cell division and chromosome segregation. The chain is Probable cell division protein WhiA from Leuconostoc citreum (strain KM20).